A 547-amino-acid chain; its full sequence is MAAKEVKFGDSGRKKMLAGVNVLADAVKATLGPKGRNVIIEKSFGAPLITKDGVSVAKEIELKDRFENMGAQLVKDVASRANDDAGDGTTTATVLAQAIVNEGLKAVAAGMNPMDLKRGIDKATIAIVAELKKLSKPCTDTKAIAQVGTISANSDHSIGDIIAEAMEKVTKDGVITVEEGSGLENELSVVEGMQFDRGYLSPYFINKPDTMVAELDSPLLLLVDKKISNIREMLPVLEAVAKAGRPLLIVAEDVEGEALATLVVNNMRGIVKVAAVKAPGFGDRRKAMLQDIAVLTGGTVISEEVGLSLETTTLEHLGNAKRVILNKENTTIIDGAGVKTDIDSRISQIRQQIGDTSSDYDKEKLQERLAKLSGGVAVIKVGAGSEVEMKEKKARVEDALHATRAAVEEGVVPGGGVALVRSLQAIEGLKGDNADQDVGIALLRRAVEAPLRQIVANSGDEPSVVVDKVKQGSGNFGYNAASGEYGDMIEMGILDPAKVTRSALQAASSIASLMITTEAMIADVPEDKPAGGGMPDMGGMGGMGGMM.

ATP contacts are provided by residues 30-33 (TLGP), K51, 87-91 (DGTTT), G415, 479-481 (NAA), and D495.

It belongs to the chaperonin (HSP60) family. In terms of assembly, forms a cylinder of 14 subunits composed of two heptameric rings stacked back-to-back. Interacts with the co-chaperonin GroES.

It is found in the cytoplasm. The enzyme catalyses ATP + H2O + a folded polypeptide = ADP + phosphate + an unfolded polypeptide.. Its function is as follows. Together with its co-chaperonin GroES, plays an essential role in assisting protein folding. The GroEL-GroES system forms a nano-cage that allows encapsulation of the non-native substrate proteins and provides a physical environment optimized to promote and accelerate protein folding. The chain is Chaperonin GroEL from Pseudomonas savastanoi pv. phaseolicola (strain 1448A / Race 6) (Pseudomonas syringae pv. phaseolicola (strain 1448A / Race 6)).